The sequence spans 300 residues: Tyrosine recombinase XerC (300 aa).

The region spanning 2–88 (ENVNFTLNLF…SLRSFYKFLL (87 aa)) is the Core-binding (CB) domain. The region spanning 109-294 (KIPHFLYPDE…TKDHLRYVYL (186 aa)) is the Tyr recombinase domain. Residues Arg-149, Lys-173, His-246, Arg-249, and His-272 contribute to the active site. The O-(3'-phospho-DNA)-tyrosine intermediate role is filled by Tyr-281.

The protein belongs to the 'phage' integrase family. XerC subfamily. Forms a cyclic heterotetrameric complex composed of two molecules of XerC and two molecules of XerD.

The protein localises to the cytoplasm. In terms of biological role, site-specific tyrosine recombinase, which acts by catalyzing the cutting and rejoining of the recombining DNA molecules. The XerC-XerD complex is essential to convert dimers of the bacterial chromosome into monomers to permit their segregation at cell division. It also contributes to the segregational stability of plasmids. This Anoxybacillus flavithermus (strain DSM 21510 / WK1) protein is Tyrosine recombinase XerC.